The sequence spans 149 residues: General odorant-binding protein 57c (149 aa).

The signal sequence occupies residues 1–16 (MLKLWLICILTVSVVS). 3 cysteine pairs are disulfide-bonded: C32–C70, C66–C117, and C106–C126.

It belongs to the PBP/GOBP family.

Present in the aqueous fluid surrounding olfactory sensory dendrites and are thought to aid in the capture and transport of hydrophobic odorants into and through this fluid. The sequence is that of General odorant-binding protein 57c from Drosophila melanogaster (Fruit fly).